The following is a 445-amino-acid chain: Phosphoglucosamine mutase (445 aa).

Catalysis depends on S102, which acts as the Phosphoserine intermediate. Residues S102, D241, D243, and D245 each coordinate Mg(2+). Phosphoserine is present on S102.

It belongs to the phosphohexose mutase family. Mg(2+) serves as cofactor. Activated by phosphorylation.

The enzyme catalyses alpha-D-glucosamine 1-phosphate = D-glucosamine 6-phosphate. Catalyzes the conversion of glucosamine-6-phosphate to glucosamine-1-phosphate. This chain is Phosphoglucosamine mutase, found in Aliivibrio salmonicida (strain LFI1238) (Vibrio salmonicida (strain LFI1238)).